A 135-amino-acid polypeptide reads, in one-letter code: Small ribosomal subunit protein bS6 (135 aa).

Position 93 is an N6-acetyllysine (K93). Residues 98–135 are disordered; that stretch reads EASPMVKAKDERRERRDDFANETADDAEAGDSEEEEEE. Over residues 104 to 116 the composition is skewed to basic and acidic residues; sequence KAKDERRERRDDF. Acidic residues predominate over residues 120-135; it reads TADDAEAGDSEEEEEE.

The protein belongs to the bacterial ribosomal protein bS6 family. In terms of assembly, part of the 30S ribosomal subunit. Interacts weakly with uL2 in one of the 3.5 A resolved structures. 5 different forms of the protein, varying only in the number of C-terminal glutamate residues, were isolated. The sequence shown is form bS6-6, which is the longest. The first two Glu are encoded by the rpsF gene, the other Glu are added post-translationally by the RimK enzyme.

In terms of biological role, binds together with bS18 to 16S ribosomal RNA. This Escherichia coli (strain K12) protein is Small ribosomal subunit protein bS6 (rpsF).